The sequence spans 92 residues: Large ribosomal subunit protein eL43A (92 aa).

A C4-type zinc finger spans residues 39-60; that stretch reads CSFCGKKTVKRGAAGIWTCSCC. Ser-40 is subject to Phosphoserine.

This sequence belongs to the eukaryotic ribosomal protein eL43 family. As to quaternary structure, component of the large ribosomal subunit (LSU). Mature yeast ribosomes consist of a small (40S) and a large (60S) subunit. The 40S small subunit contains 1 molecule of ribosomal RNA (18S rRNA) and 33 different proteins (encoded by 57 genes). The large 60S subunit contains 3 rRNA molecules (25S, 5.8S and 5S rRNA) and 46 different proteins (encoded by 81 genes).

The protein localises to the cytoplasm. Functionally, component of the ribosome, a large ribonucleoprotein complex responsible for the synthesis of proteins in the cell. The small ribosomal subunit (SSU) binds messenger RNAs (mRNAs) and translates the encoded message by selecting cognate aminoacyl-transfer RNA (tRNA) molecules. The large subunit (LSU) contains the ribosomal catalytic site termed the peptidyl transferase center (PTC), which catalyzes the formation of peptide bonds, thereby polymerizing the amino acids delivered by tRNAs into a polypeptide chain. The nascent polypeptides leave the ribosome through a tunnel in the LSU and interact with protein factors that function in enzymatic processing, targeting, and the membrane insertion of nascent chains at the exit of the ribosomal tunnel. The chain is Large ribosomal subunit protein eL43A from Saccharomyces cerevisiae (strain ATCC 204508 / S288c) (Baker's yeast).